The primary structure comprises 59 residues: Sec-independent protein translocase protein TatA (59 aa).

The helical transmembrane segment at 1-21 (MFSNIGFPGLILILVAVLILF) threads the bilayer.

Belongs to the TatA/E family. Forms a complex with TatC.

Its subcellular location is the cell membrane. Part of the twin-arginine translocation (Tat) system that transports large folded proteins containing a characteristic twin-arginine motif in their signal peptide across membranes. TatA could form the protein-conducting channel of the Tat system. In Bacillus mycoides (strain KBAB4) (Bacillus weihenstephanensis), this protein is Sec-independent protein translocase protein TatA.